The sequence spans 185 residues: Elongation factor P (185 aa).

Belongs to the elongation factor P family.

The protein localises to the cytoplasm. It functions in the pathway protein biosynthesis; polypeptide chain elongation. Functionally, involved in peptide bond synthesis. Stimulates efficient translation and peptide-bond synthesis on native or reconstituted 70S ribosomes in vitro. Probably functions indirectly by altering the affinity of the ribosome for aminoacyl-tRNA, thus increasing their reactivity as acceptors for peptidyl transferase. This is Elongation factor P from Mesomycoplasma hyopneumoniae (strain 232) (Mycoplasma hyopneumoniae).